The following is a 483-amino-acid chain: Proline--tRNA ligase (483 aa).

The protein belongs to the class-II aminoacyl-tRNA synthetase family. ProS type 3 subfamily. Homodimer.

Its subcellular location is the cytoplasm. The enzyme catalyses tRNA(Pro) + L-proline + ATP = L-prolyl-tRNA(Pro) + AMP + diphosphate. Catalyzes the attachment of proline to tRNA(Pro) in a two-step reaction: proline is first activated by ATP to form Pro-AMP and then transferred to the acceptor end of tRNA(Pro). In Sulfolobus acidocaldarius (strain ATCC 33909 / DSM 639 / JCM 8929 / NBRC 15157 / NCIMB 11770), this protein is Proline--tRNA ligase.